Consider the following 301-residue polypeptide: MQDPGHLQGPPLALDPPRRQRQERTVYTESQQKVLEFYFQKDQYPNYDQRLNLAEMLSLREQQLQVWFKNRRAKLARERRLQQQPQRVPGQRGRGARAAPLVPVAAASFPGGPEFPQGRGSWISPQPGPWGVLPAAEPKIYSLPRTWGGPECGTQEGLKAVPAPGPGPIPAPIPGPAQIPGPVPGPAPNLGPMSGPLSVSIPGPIPAPISCPGPIPDPVLGRTLMPGPGSLPTPAPGALWPQSPYASNLSPDTQLYPDFTKLLPLLDRFEESSLSTTTSQYKEEDGFVDKNHSVPRSLLDL.

2 disordered regions span residues 1–27 (MQDP…RTVY) and 273–301 (SLST…LLDL). 2 stretches are compositionally biased toward basic and acidic residues: residues 16–26 (PPRRQRQERTV) and 281–292 (YKEEDGFVDKNH). The homeobox DNA-binding region spans 20–79 (QRQERTVYTESQQKVLEFYFQKDQYPNYDQRLNLAEMLSLREQQLQVWFKNRRAKLARER).

It belongs to the paired homeobox family.

The protein localises to the nucleus. Transcription factor expressed after fertilization required for zygotic genome activation (ZGA), a critical event in early embryonic development during which the developmental control passes from maternally provided mRNAs to the expression of the zygotic genome after fertilization. Binds and activates expression of key ZGA marker genes, such as NANOGNB, ZSCAN4, DUXB, KLF5 and DPPA3. Binds to regulatory DNA sequences containing a 5'-TAATCC-3' sequence motif. The sequence is that of Tetrapeptide repeat homeobox protein 2 from Homo sapiens (Human).